We begin with the raw amino-acid sequence, 149 residues long: 3-dehydroquinate dehydratase (149 aa).

Tyr25 serves as the catalytic Proton acceptor. Positions 76, 82, and 89 each coordinate substrate. His102 serves as the catalytic Proton donor. Substrate is bound by residues 103 to 104 (LS) and Arg113.

It belongs to the type-II 3-dehydroquinase family. As to quaternary structure, homododecamer.

It catalyses the reaction 3-dehydroquinate = 3-dehydroshikimate + H2O. The protein operates within metabolic intermediate biosynthesis; chorismate biosynthesis; chorismate from D-erythrose 4-phosphate and phosphoenolpyruvate: step 3/7. Its function is as follows. Catalyzes a trans-dehydration via an enolate intermediate. This Acaryochloris marina (strain MBIC 11017) protein is 3-dehydroquinate dehydratase.